The chain runs to 266 residues: MRKNTYAMRYVAGQPAERILPPGSFASIGQALPAGEPLSSEERIRILVWNIFKQQRAEWLSVLKNYGKDAHLVLLQEAQTTPELVQFATANYLAADQVPAFVLPQHPSGVMTLSAAHPVYCCPLREREPILRLAKSALVTVYPLPDTRLLMVVNVHAVNFSLGVDVYSKQLLPIGDQIAHHSGPVIMAGDFNAWSRPRMNALYRFAREMSLRQVRFTDDQRRRAFGRPLDFVFYRGLNVNEASVLVTRASDHNPLLVEFSPGKPEQ.

It belongs to the UPF0294 family.

The protein resides in the cytoplasm. This chain is UPF0294 protein YafD, found in Salmonella agona (strain SL483).